Here is a 354-residue protein sequence, read N- to C-terminus: Nicotinate-nucleotide--dimethylbenzimidazole phosphoribosyltransferase (354 aa).

The active-site Proton acceptor is the Glu-317.

This sequence belongs to the CobT family. In terms of assembly, homodimer.

The enzyme catalyses 5,6-dimethylbenzimidazole + nicotinate beta-D-ribonucleotide = alpha-ribazole 5'-phosphate + nicotinate + H(+). It participates in nucleoside biosynthesis; alpha-ribazole biosynthesis; alpha-ribazole from 5,6-dimethylbenzimidazole: step 1/2. Catalyzes the synthesis of alpha-ribazole-5'-phosphate from nicotinate mononucleotide (NAMN) and 5,6-dimethylbenzimidazole (DMB). The protein is Nicotinate-nucleotide--dimethylbenzimidazole phosphoribosyltransferase of Salmonella arizonae (strain ATCC BAA-731 / CDC346-86 / RSK2980).